The following is a 72-amino-acid chain: MVLSKKTIMQSFALMIILSIVMSTTEAKTIGNPAMREDEPKGCPPGSPASCKMQPANPYKPGCEASQRCRGT.

Positions 1 to 27 are cleaved as a signal peptide; sequence MVLSKKTIMQSFALMIILSIVMSTTEA. Intrachain disulfides connect Cys43/Cys51 and Cys63/Cys69.

It belongs to the plant rapid alkalinization factor (RALF) family.

It localises to the secreted. Cell signaling peptide that may regulate plant stress, growth, and development. Mediates a rapid alkalinization of extracellular space by mediating a transient increase in the cytoplasmic Ca(2+) concentration leading to a calcium-dependent signaling events through a cell surface receptor and a concomitant activation of some intracellular mitogen-activated protein kinases. The sequence is that of Protein RALF-like 20 (RALFL20) from Arabidopsis thaliana (Mouse-ear cress).